We begin with the raw amino-acid sequence, 114 residues long: Fructose-bisphosphate aldolase 2 (114 aa).

35–38 (NIDT) is a binding site for dihydroxyacetone phosphate.

This sequence belongs to the class II fructose-bisphosphate aldolase family. Homodimer. It depends on Zn(2+) as a cofactor.

The catalysed reaction is beta-D-fructose 1,6-bisphosphate = D-glyceraldehyde 3-phosphate + dihydroxyacetone phosphate. It participates in carbohydrate biosynthesis; Calvin cycle. Its pathway is carbohydrate degradation; glycolysis; D-glyceraldehyde 3-phosphate and glycerone phosphate from D-glucose: step 4/4. Functionally, catalyzes the aldol condensation of dihydroxyacetone phosphate (DHAP or glycerone-phosphate) with glyceraldehyde 3-phosphate (G3P) to form fructose 1,6-bisphosphate (FBP) in gluconeogenesis and the reverse reaction in glycolysis. In Rhodobacter capsulatus (Rhodopseudomonas capsulata), this protein is Fructose-bisphosphate aldolase 2 (cbbA).